Reading from the N-terminus, the 482-residue chain is O-phosphoseryl-tRNA(Sec) selenium transferase (482 aa).

A tetramerization region spans residues 1–36 (MKSSFGKKEGEYSRLVSKSSNKLLNSLWEKKQIPEE). Arg69 is a pyridoxal 5'-phosphate binding site. A phosphate loop (P-loop) region spans residues 90-100 (GRSGNLLEIQP). Substrate is bound by residues Arg91, Ser92, and Gln99. Lys277 carries the post-translational modification N6-(pyridoxal phosphate)lysine. Arg306 is a substrate binding site. Arg388 is a tRNA binding site. A disordered region spans residues 461–482 (DRRGGSSGRRVPMNESFDMEND).

It belongs to the SepSecS family. In terms of assembly, homotetramer formed by a catalytic dimer and a non-catalytic dimer serving as a binding platform that orients tRNASec for catalysis. Each tetramer binds the CCA ends of two tRNAs which point to the active sites of the catalytic dimer. Pyridoxal 5'-phosphate serves as cofactor.

The protein resides in the cytoplasm. The enzyme catalyses O-phospho-L-seryl-tRNA(Sec) + selenophosphate + H2O = L-selenocysteinyl-tRNA(Sec) + 2 phosphate. It functions in the pathway aminoacyl-tRNA biosynthesis; selenocysteinyl-tRNA(Sec) biosynthesis; selenocysteinyl-tRNA(Sec) from L-seryl-tRNA(Sec) (archaeal/eukaryal route): step 2/2. Converts O-phosphoseryl-tRNA(Sec) to selenocysteinyl-tRNA(Sec) required for selenoprotein biosynthesis. In Caenorhabditis briggsae, this protein is O-phosphoseryl-tRNA(Sec) selenium transferase (secs-1).